Reading from the N-terminus, the 546-residue chain is Glutamyl-tRNA(Gln) amidotransferase subunit A, chloroplastic/mitochondrial (546 aa).

The interval 21–52 is disordered; it reads KRRRFHSSTPLFLSQPQTLASTDPPSSPPQSQ. Polar residues predominate over residues 27-43; it reads SSTPLFLSQPQTLASTD. Residues Lys123 and Ser198 each act as charge relay system in the active site. Catalysis depends on Ser222, which acts as the Acyl-ester intermediate.

Belongs to the amidase family. GatA subfamily. Subunit of the heterotrimeric GatCAB amidotransferase (AdT) complex, composed of A, B and C subunits.

The protein localises to the mitochondrion. It localises to the plastid. Its subcellular location is the chloroplast stroma. It catalyses the reaction L-glutamyl-tRNA(Gln) + L-glutamine + ATP + H2O = L-glutaminyl-tRNA(Gln) + L-glutamate + ADP + phosphate + H(+). Its function is as follows. Allows the formation of correctly charged Gln-tRNA(Gln) through the transamidation of misacylated Glu-tRNA(Gln) in chloroplasts and mitochondria. The reaction takes place in the presence of glutamine and ATP through an activated gamma-phospho-Glu-tRNA(Gln). The chain is Glutamyl-tRNA(Gln) amidotransferase subunit A, chloroplastic/mitochondrial from Vitis vinifera (Grape).